The following is a 177-amino-acid chain: ATP synthase subunit delta (177 aa).

This sequence belongs to the ATPase delta chain family. F-type ATPases have 2 components, F(1) - the catalytic core - and F(0) - the membrane proton channel. F(1) has five subunits: alpha(3), beta(3), gamma(1), delta(1), epsilon(1). F(0) has three main subunits: a(1), b(2) and c(10-14). The alpha and beta chains form an alternating ring which encloses part of the gamma chain. F(1) is attached to F(0) by a central stalk formed by the gamma and epsilon chains, while a peripheral stalk is formed by the delta and b chains.

It localises to the cell membrane. Its function is as follows. F(1)F(0) ATP synthase produces ATP from ADP in the presence of a proton or sodium gradient. F-type ATPases consist of two structural domains, F(1) containing the extramembraneous catalytic core and F(0) containing the membrane proton channel, linked together by a central stalk and a peripheral stalk. During catalysis, ATP synthesis in the catalytic domain of F(1) is coupled via a rotary mechanism of the central stalk subunits to proton translocation. Functionally, this protein is part of the stalk that links CF(0) to CF(1). It either transmits conformational changes from CF(0) to CF(1) or is implicated in proton conduction. The sequence is that of ATP synthase subunit delta from Buchnera aphidicola subsp. Acyrthosiphon pisum (strain APS) (Acyrthosiphon pisum symbiotic bacterium).